Reading from the N-terminus, the 1976-residue chain is Myosin-10 (1976 aa).

R18 bears the Omega-N-methylarginine mark. The region spanning 31 to 81 is the Myosin N-terminal SH3-like domain; it reads TAKKLVWIPSERHGFEAASIKEERGDEVMVELAENGKKAMVNKDDIQKMNP. The region spanning 85 to 783 is the Myosin motor domain; sequence SKVEDMAELT…VLAHLEEERD (699 aa). 178–185 provides a ligand contact to ATP; that stretch reads GESGAGKT. Position 442 is an N6-acetyllysine (K442). An actin-binding region spans residues 661 to 683; sequence LTKLMATLRNTNPNFVRCIIPNH. In terms of domain architecture, IQ spans 786-815; the sequence is ITDIIIFFQAVCRGYLARKAFAKKQQQLSA. Residues 845–1976 adopt a coiled-coil conformation; that stretch reads LQVTRQEEEL…VNDTQPPQSE (1132 aa). Residues 1125–1175 are disordered; sequence EDFESEKASRNKAEKQKRDLSEELEALKTELEDTLDTTAAQQELRTKREQE. Residues 1129–1155 are compositionally biased toward basic and acidic residues; it reads SEKASRNKAEKQKRDLSEELEALKTEL. Residue S1145 is modified to Phosphoserine. N6-acetyllysine occurs at positions 1241, 1301, and 1645. Disordered regions lie at residues 1697–1718 and 1874–1976; these read ASSE…DEIA and KANA…PQSE. The span at 1698 to 1708 shows a compositional bias: basic and acidic residues; sequence SSERARRHAEQ. R1930 carries the post-translational modification Omega-N-methylarginine. Phosphoserine occurs at positions 1935, 1937, 1938, and 1939. R1940 is subject to Omega-N-methylarginine. S1952 and S1956 each carry phosphoserine. Position 1960 is a phosphothreonine (T1960). Positions 1967-1976 are enriched in polar residues; that stretch reads VNDTQPPQSE. S1975 carries the post-translational modification Phosphoserine.

It belongs to the TRAFAC class myosin-kinesin ATPase superfamily. Myosin family. As to quaternary structure, myosin is a hexameric protein that consists of 2 heavy chain subunits (MHC), 2 alkali light chain subunits (MLC) and 2 regulatory light chain subunits (MLC-2). Interacts with PLEKHG6. Interacts with ECPAS. Interacts with LARP6. Interacts with MCC. Interacts with KIF26B. Interacts with CFAP95. In terms of processing, phosphorylated by ABL2. As to expression, in newborn kidney, expressed in the mesenchyme and ureteric buds.

The protein resides in the cell projection. It is found in the lamellipodium. Involved with LARP6 in the stabilization of type I collagen mRNAs for CO1A1 and CO1A2. During cell spreading, plays an important role in cytoskeleton reorganization, focal contacts formation (in the central part but not the margins of spreading cells), and lamellipodial extension; this function is mechanically antagonized by MYH9. Cellular myosin that appears to play a role in cytokinesis, cell shape, and specialized functions such as secretion and capping. The protein is Myosin-10 (Myh10) of Mus musculus (Mouse).